Consider the following 285-residue polypeptide: Glutamate racemase (285 aa).

Substrate contacts are provided by residues 28-29 (DS) and 60-61 (YG). Cys92 functions as the Proton donor/acceptor in the catalytic mechanism. 93 to 94 (NT) contributes to the substrate binding site. The active-site Proton donor/acceptor is Cys204. A substrate-binding site is contributed by 205-206 (TH).

This sequence belongs to the aspartate/glutamate racemases family.

The catalysed reaction is L-glutamate = D-glutamate. The protein operates within cell wall biogenesis; peptidoglycan biosynthesis. Its function is as follows. Provides the (R)-glutamate required for cell wall biosynthesis. This Shigella flexneri serotype 5b (strain 8401) protein is Glutamate racemase.